The primary structure comprises 360 residues: Phospho-N-acetylmuramoyl-pentapeptide-transferase (360 aa).

A run of 10 helical transmembrane segments spans residues 26–46 (AIMS…RLIA), 70–90 (GTPT…ALLW), 94–114 (SNPY…VGFV), 132–152 (WKYF…YMHG), 168–188 (VMPQ…VGTS), 199–219 (GLAI…AWAT), 239–259 (LVVL…FNTY), 263–283 (VFMG…IAVL), 288–308 (LLLV…ILQV), and 338–358 (VIVR…ATLK).

The protein belongs to the glycosyltransferase 4 family. MraY subfamily. Mg(2+) is required as a cofactor.

Its subcellular location is the cell inner membrane. It catalyses the reaction UDP-N-acetyl-alpha-D-muramoyl-L-alanyl-gamma-D-glutamyl-meso-2,6-diaminopimeloyl-D-alanyl-D-alanine + di-trans,octa-cis-undecaprenyl phosphate = di-trans,octa-cis-undecaprenyl diphospho-N-acetyl-alpha-D-muramoyl-L-alanyl-D-glutamyl-meso-2,6-diaminopimeloyl-D-alanyl-D-alanine + UMP. It participates in cell wall biogenesis; peptidoglycan biosynthesis. Functionally, catalyzes the initial step of the lipid cycle reactions in the biosynthesis of the cell wall peptidoglycan: transfers peptidoglycan precursor phospho-MurNAc-pentapeptide from UDP-MurNAc-pentapeptide onto the lipid carrier undecaprenyl phosphate, yielding undecaprenyl-pyrophosphoryl-MurNAc-pentapeptide, known as lipid I. In Photobacterium profundum (strain SS9), this protein is Phospho-N-acetylmuramoyl-pentapeptide-transferase.